The following is a 172-amino-acid chain: Small ribosomal subunit protein uS5 (172 aa).

The S5 DRBM domain maps to 17-80 (LREKMIAVNR…DEARRKMIKV (64 aa)).

The protein belongs to the universal ribosomal protein uS5 family. In terms of assembly, part of the 30S ribosomal subunit. Contacts proteins S4 and S8.

Functionally, with S4 and S12 plays an important role in translational accuracy. Located at the back of the 30S subunit body where it stabilizes the conformation of the head with respect to the body. This is Small ribosomal subunit protein uS5 from Polynucleobacter asymbioticus (strain DSM 18221 / CIP 109841 / QLW-P1DMWA-1) (Polynucleobacter necessarius subsp. asymbioticus).